The chain runs to 232 residues: RNA chaperone ProQ (232 aa).

Residues 105-182 (EAKARVQAQR…REEQHTPVSD (78 aa)) form a disordered region. Over residues 117-136 (QQAKKREAAAAAGEKEDAPR) the composition is skewed to basic and acidic residues. Residues 137-146 (RERKPRPTTP) show a composition bias toward basic residues. A compositionally biased stretch (basic and acidic residues) spans 147–177 (RRKEGAERKPRSQKPVEKAPKTVKAPREEQH).

The protein belongs to the ProQ family.

The protein localises to the cytoplasm. Its function is as follows. RNA chaperone with significant RNA binding, RNA strand exchange and RNA duplexing activities. May regulate ProP activity through an RNA-based, post-transcriptional mechanism. This Escherichia coli (strain UTI89 / UPEC) protein is RNA chaperone ProQ.